We begin with the raw amino-acid sequence, 616 residues long: Chaperone protein HscA homolog (616 aa).

This sequence belongs to the heat shock protein 70 family.

Functionally, chaperone involved in the maturation of iron-sulfur cluster-containing proteins. Has a low intrinsic ATPase activity which is markedly stimulated by HscB. The chain is Chaperone protein HscA homolog from Aliivibrio fischeri (strain MJ11) (Vibrio fischeri).